The primary structure comprises 124 residues: Large ribosomal subunit protein bL12 (124 aa).

Belongs to the bacterial ribosomal protein bL12 family. Homodimer. Part of the ribosomal stalk of the 50S ribosomal subunit. Forms a multimeric L10(L12)X complex, where L10 forms an elongated spine to which 2 to 4 L12 dimers bind in a sequential fashion. Binds GTP-bound translation factors.

Its function is as follows. Forms part of the ribosomal stalk which helps the ribosome interact with GTP-bound translation factors. Is thus essential for accurate translation. This chain is Large ribosomal subunit protein bL12, found in Christiangramia forsetii (strain DSM 17595 / CGMCC 1.15422 / KT0803) (Gramella forsetii).